The chain runs to 426 residues: Serine--tRNA ligase (426 aa).

Position 231-233 (231-233 (TAE)) interacts with L-serine. ATP contacts are provided by residues 262–264 (RRE) and V278. E285 contacts L-serine. 349-352 (EVSS) serves as a coordination point for ATP. S384 contacts L-serine.

This sequence belongs to the class-II aminoacyl-tRNA synthetase family. Type-1 seryl-tRNA synthetase subfamily. Homodimer. The tRNA molecule binds across the dimer.

The protein localises to the cytoplasm. The enzyme catalyses tRNA(Ser) + L-serine + ATP = L-seryl-tRNA(Ser) + AMP + diphosphate + H(+). It catalyses the reaction tRNA(Sec) + L-serine + ATP = L-seryl-tRNA(Sec) + AMP + diphosphate + H(+). It participates in aminoacyl-tRNA biosynthesis; selenocysteinyl-tRNA(Sec) biosynthesis; L-seryl-tRNA(Sec) from L-serine and tRNA(Sec): step 1/1. Functionally, catalyzes the attachment of serine to tRNA(Ser). Is also able to aminoacylate tRNA(Sec) with serine, to form the misacylated tRNA L-seryl-tRNA(Sec), which will be further converted into selenocysteinyl-tRNA(Sec). The polypeptide is Serine--tRNA ligase (Chlamydia felis (strain Fe/C-56) (Chlamydophila felis)).